A 169-amino-acid polypeptide reads, in one-letter code: Copper-resistant cuproprotein CopI (169 aa).

An N-terminal signal peptide occupies residues 1 to 20 (MIKKTLLVIALTFTVTTAFA). The Cu(2+) site is built by His98, Cys153, His158, and Met163.

The protein belongs to the CopI family.

Its subcellular location is the periplasm. In terms of biological role, involved in copper tolerance. Mediates copper tolerance in aerobiosis. May also mediate tolerance under anaerobiosis. Not required for virulence or colonization in the mouse model. The polypeptide is Copper-resistant cuproprotein CopI (Vibrio cholerae serotype O1 (strain ATCC 39315 / El Tor Inaba N16961)).